We begin with the raw amino-acid sequence, 186 residues long: MISSNDFRTGTSIELDGSVWRVVEFLHVKPGKGSAFVRTKLKAVQSGNVVEKTFRAGEMLPQALLEKSTLQHTYMESGDYVFMDMSSYEETRLTAQQIGDSRKYLKEGMEVNVVSWNGNPLEVELPNSVVLEITETDPGVKGDTATGGTKPAILETGAQVMVPLFLSVGEKIKVDTRNDSYLGREN.

Belongs to the elongation factor P family.

It is found in the cytoplasm. It functions in the pathway protein biosynthesis; polypeptide chain elongation. Involved in peptide bond synthesis. Stimulates efficient translation and peptide-bond synthesis on native or reconstituted 70S ribosomes in vitro. Probably functions indirectly by altering the affinity of the ribosome for aminoacyl-tRNA, thus increasing their reactivity as acceptors for peptidyl transferase. The chain is Elongation factor P from Prochlorococcus marinus (strain MIT 9313).